A 646-amino-acid polypeptide reads, in one-letter code: Phosphomethylpyrimidine synthase (646 aa).

Substrate is bound by residues Asn-235, Met-264, Tyr-293, His-329, 349 to 351 (SRG), 390 to 393 (DGLR), and Glu-429. Position 433 (His-433) interacts with Zn(2+). Tyr-456 is a binding site for substrate. His-497 is a Zn(2+) binding site. 3 residues coordinate [4Fe-4S] cluster: Cys-577, Cys-580, and Cys-585.

It belongs to the ThiC family. Homodimer. The cofactor is [4Fe-4S] cluster.

The enzyme catalyses 5-amino-1-(5-phospho-beta-D-ribosyl)imidazole + S-adenosyl-L-methionine = 4-amino-2-methyl-5-(phosphooxymethyl)pyrimidine + CO + 5'-deoxyadenosine + formate + L-methionine + 3 H(+). The protein operates within cofactor biosynthesis; thiamine diphosphate biosynthesis. Catalyzes the synthesis of the hydroxymethylpyrimidine phosphate (HMP-P) moiety of thiamine from aminoimidazole ribotide (AIR) in a radical S-adenosyl-L-methionine (SAM)-dependent reaction. In Vibrio campbellii (strain ATCC BAA-1116), this protein is Phosphomethylpyrimidine synthase.